The following is a 473-amino-acid chain: Argininosuccinate lyase (473 aa).

Alanine 2 is subject to N-acetylalanine. Residue lysine 7 is modified to N6-acetyllysine. A 2-(N(omega)-L-arginino)succinate-binding site is contributed by serine 27. Position 69 is an N6-acetyllysine (lysine 69). Residues asparagine 114 and threonine 159 each coordinate 2-(N(omega)-L-arginino)succinate. Histidine 160 serves as the catalytic Proton acceptor. The active-site Proton donor is the serine 281. Residue lysine 288 is modified to N6-acetyllysine. 2-(N(omega)-L-arginino)succinate contacts are provided by asparagine 289, tyrosine 321, glutamine 326, and lysine 329.

This sequence belongs to the lyase 1 family. Argininosuccinate lyase subfamily. In terms of assembly, homotetramer. Forms tissue-specific complexes with ASS1, SLC7A1, HSP90AA1 and nitric oxide synthase NOS1, NOS2 or NOS3; the complex maintenance is independent of ASL catalytic function. Acetylation modifies enzyme activity in response to alterations of extracellular nutrient availability. Acetylation increased with trichostin A (TSA) or with nicotinamide (NAM). Glucose increases acetylation by about a factor of 3 with decreasing enzyme activity. Acetylation on Lys-288 is decreased on the addition of extra amino acids resulting in activation of enzyme activity.

It carries out the reaction 2-(N(omega)-L-arginino)succinate = fumarate + L-arginine. Its pathway is amino-acid biosynthesis; L-arginine biosynthesis; L-arginine from L-ornithine and carbamoyl phosphate: step 3/3. The protein operates within nitrogen metabolism; urea cycle; L-arginine and fumarate from (N(omega)-L-arginino)succinate: step 1/1. Enzyme activity is regulated by acetylation. Its function is as follows. Catalyzes the reversible cleavage of L-argininosuccinate to fumarate and L-arginine, an intermediate step reaction in the urea cycle mostly providing for hepatic nitrogen detoxification into excretable urea as well as de novo L-arginine synthesis in nonhepatic tissues. Essential regulator of intracellular and extracellular L-arginine pools. As part of citrulline-nitric oxide cycle, forms tissue-specific multiprotein complexes with argininosuccinate synthase ASS1, transport protein SLC7A1 and nitric oxide synthase NOS1, NOS2 or NOS3, allowing for cell-autonomous L-arginine synthesis while channeling extracellular L-arginine to nitric oxide synthesis pathway. The protein is Argininosuccinate lyase (ASL) of Bos taurus (Bovine).